The sequence spans 967 residues: Importin-alpha re-exporter (967 aa).

The Importin N-terminal domain maps to 20–95; the sequence is AEEALKVWEL…KREIINLMLK (76 aa).

Belongs to the XPO2/CSE1 family. In terms of assembly, binds with high affinity to importin-alpha only in the presence of RanGTP.

The protein localises to the cytoplasm. It localises to the nucleus envelope. Export receptor for importin alpha. Mediates importin-alpha re-export from the nucleus to the cytoplasm after import substrates have been released into the nucleoplasm. This is Importin-alpha re-exporter (kap109) from Schizosaccharomyces pombe (strain 972 / ATCC 24843) (Fission yeast).